Here is a 407-residue protein sequence, read N- to C-terminus: Imidazolonepropionase (407 aa).

Fe(3+) contacts are provided by H74 and H76. H74 and H76 together coordinate Zn(2+). Residues R83, Y146, and H179 each contribute to the 4-imidazolone-5-propanoate site. Y146 contacts N-formimidoyl-L-glutamate. H244 contacts Fe(3+). H244 serves as a coordination point for Zn(2+). Q247 contacts 4-imidazolone-5-propanoate. D319 is a binding site for Fe(3+). A Zn(2+)-binding site is contributed by D319. Residues N321 and G323 each contribute to the N-formimidoyl-L-glutamate site. Residue T324 coordinates 4-imidazolone-5-propanoate.

Belongs to the metallo-dependent hydrolases superfamily. HutI family. Zn(2+) is required as a cofactor. It depends on Fe(3+) as a cofactor.

It is found in the cytoplasm. The enzyme catalyses 4-imidazolone-5-propanoate + H2O = N-formimidoyl-L-glutamate. Its pathway is amino-acid degradation; L-histidine degradation into L-glutamate; N-formimidoyl-L-glutamate from L-histidine: step 3/3. Functionally, catalyzes the hydrolytic cleavage of the carbon-nitrogen bond in imidazolone-5-propanoate to yield N-formimidoyl-L-glutamate. It is the third step in the universal histidine degradation pathway. This Salmonella typhimurium (strain LT2 / SGSC1412 / ATCC 700720) protein is Imidazolonepropionase.